The primary structure comprises 237 residues: Early nodulin-like protein 1 (237 aa).

The signal sequence occupies residues 1–28; the sequence is MEASRRWPYAAWFMAVLGLVAVFSSSEA. Residues 29 to 134 form the Phytocyanin domain; that stretch reads YVFYAGGRDG…GQKLYIIVMA (106 aa). Asparagine 59 carries N-linked (GlcNAc...) asparagine glycosylation. Cysteines 85 and 122 form a disulfide. Positions 139–215 are disordered; sequence KPSEAPEPAG…SLGAPPPTSG (77 aa). Low complexity-rich tracts occupy residues 140–152 and 201–215; these read PSEA…AAGP and MSRS…PTSG. The GPI-anchor amidated serine moiety is linked to residue serine 206. The propeptide at 207–237 is removed in mature form; the sequence is LGAPPPTSGAAGLAGVVASVVVGVLGALLMF.

It belongs to the early nodulin-like (ENODL) family. Expressed ubiquitously. Accumulates particularly in reproductive tissues, especially in maturing seeds.

The protein localises to the vacuole. It localises to the aleurone grain membrane. Functionally, may act as a carbohydrate transporter. This chain is Early nodulin-like protein 1, found in Oryza sativa subsp. japonica (Rice).